Reading from the N-terminus, the 330-residue chain is tRNA U34 carboxymethyltransferase (330 aa).

Carboxy-S-adenosyl-L-methionine contacts are provided by residues lysine 91, tryptophan 105, lysine 110, glycine 130, 152–154 (DPS), 181–182 (IE), methionine 196, tyrosine 200, and arginine 315.

This sequence belongs to the class I-like SAM-binding methyltransferase superfamily. CmoB family. In terms of assembly, homotetramer.

The catalysed reaction is carboxy-S-adenosyl-L-methionine + 5-hydroxyuridine(34) in tRNA = 5-carboxymethoxyuridine(34) in tRNA + S-adenosyl-L-homocysteine + H(+). Catalyzes carboxymethyl transfer from carboxy-S-adenosyl-L-methionine (Cx-SAM) to 5-hydroxyuridine (ho5U) to form 5-carboxymethoxyuridine (cmo5U) at position 34 in tRNAs. The polypeptide is tRNA U34 carboxymethyltransferase (Shewanella oneidensis (strain ATCC 700550 / JCM 31522 / CIP 106686 / LMG 19005 / NCIMB 14063 / MR-1)).